Consider the following 498-residue polypeptide: GTPase Der (498 aa).

2 consecutive EngA-type G domains span residues 3 to 167 and 210 to 383; these read PVVA…FDDL and IKLA…KSAT. GTP contacts are provided by residues 9–16, 57–61, 119–122, 216–223, 263–267, and 328–331; these read GRPNVGKS, DTGGI, NKID, DTAGV, and NKWD. Residues 384–468 form the KH-like domain; the sequence is TRVGTSVLTR…PIRINFQNSD (85 aa).

Belongs to the TRAFAC class TrmE-Era-EngA-EngB-Septin-like GTPase superfamily. EngA (Der) GTPase family. Associates with the 50S ribosomal subunit.

In terms of biological role, GTPase that plays an essential role in the late steps of ribosome biogenesis. The sequence is that of GTPase Der from Vibrio campbellii (strain ATCC BAA-1116).